The sequence spans 408 residues: 2-acyl-4-prenylphloroglucinol 6-prenyltransferase, chloroplastic (408 aa).

The transit peptide at 1-46 (MELSSACNLSLKPNYYYYPTSLFPSNNSYNNLKASSYYQTQRPIKC) directs the protein to the chloroplast. 9 helical membrane passes run 119–139 (PIPF…ELLK), 146–166 (WQLM…HIYI), 193–213 (SVKS…LLMI), 217–237 (CGLF…MYSV), 257–277 (IGIG…GLPF), 281–301 (PPFT…SILK), 326–346 (IVLV…GVAI), 355–375 (YIMI…TWLL), and 388–408 (YYHF…FIST).

It belongs to the UbiA prenyltransferase family. As to quaternary structure, homo- and heteromer. Interacts with PT1L, forming a functional metabolon. The cofactor is Mg(2+). In terms of tissue distribution, expressed in trichomes.

Its subcellular location is the plastid. The protein localises to the chloroplast membrane. The catalysed reaction is a 2-acyl-4-prenylphloroglucinol + dimethylallyl diphosphate = a 2-acyl-4,6-diprenylphloroglucinol + diphosphate. The enzyme catalyses a 2-acyl-4,6-diprenylphloroglucinol + dimethylallyl diphosphate = a 2-acyl-4,6,6-triprenylphloroglucinol + diphosphate. It participates in secondary metabolite biosynthesis. Involved in the biosynthesis of prenylated phenolics natural products which contribute to the bitter taste of beer and display broad biological activities. Catalyzes the two last prenylation steps in the beta-bitter acid pathway. Uses dimethylallyl diphosphate (DMAPP) as the prenyl donor. This Humulus lupulus (European hop) protein is 2-acyl-4-prenylphloroglucinol 6-prenyltransferase, chloroplastic.